A 342-amino-acid polypeptide reads, in one-letter code: Phosphate acyltransferase (342 aa).

It belongs to the PlsX family. In terms of assembly, homodimer. Probably interacts with PlsY.

Its subcellular location is the cytoplasm. The enzyme catalyses a fatty acyl-[ACP] + phosphate = an acyl phosphate + holo-[ACP]. The protein operates within lipid metabolism; phospholipid metabolism. Catalyzes the reversible formation of acyl-phosphate (acyl-PO(4)) from acyl-[acyl-carrier-protein] (acyl-ACP). This enzyme utilizes acyl-ACP as fatty acyl donor, but not acyl-CoA. In Legionella pneumophila (strain Corby), this protein is Phosphate acyltransferase.